Reading from the N-terminus, the 148-residue chain is UPF0134 protein MPN_410 (148 aa).

This sequence belongs to the UPF0134 family.

This chain is UPF0134 protein MPN_410, found in Mycoplasma pneumoniae (strain ATCC 29342 / M129 / Subtype 1) (Mycoplasmoides pneumoniae).